A 134-amino-acid polypeptide reads, in one-letter code: MKKTPLLNIALSRVIASLGHGDILMIVDAGMPVPAGVELIDLALTRGVPDFISVLDVVLSEMQVESHVLANEMAEVKPPALQVIESLNLEDQLGQQRWISHEDLKVLSRKAKAIIRTGECQPYSNVALVSGVVF.

The Proton donor role is filled by H20. Residues D28, H101, and 123-125 contribute to the substrate site; that span reads YSN.

This sequence belongs to the RbsD / FucU family. RbsD subfamily. In terms of assembly, homodecamer.

It is found in the cytoplasm. It carries out the reaction beta-D-ribopyranose = beta-D-ribofuranose. It participates in carbohydrate metabolism; D-ribose degradation; D-ribose 5-phosphate from beta-D-ribopyranose: step 1/2. Functionally, catalyzes the interconversion of beta-pyran and beta-furan forms of D-ribose. The sequence is that of D-ribose pyranase from Pseudomonas syringae pv. syringae (strain B728a).